We begin with the raw amino-acid sequence, 324 residues long: Melanoma-associated antigen B16 (324 aa).

Residues methionine 1 to histidine 15 are compositionally biased toward basic and acidic residues. Disordered stretches follow at residues methionine 1–threonine 22 and leucine 39–valine 108. The span at serine 70–serine 81 shows a compositional bias: low complexity. Over residues glutamate 82–serine 95 the composition is skewed to acidic residues. An MAGE domain is found at leucine 113–alanine 312.

This Homo sapiens (Human) protein is Melanoma-associated antigen B16 (MAGEB16).